A 103-amino-acid polypeptide reads, in one-letter code: Putative protein YmfH (103 aa).

The tract at residues Met-1–Gly-34 is disordered. The span at Val-10–Val-20 shows a compositional bias: basic and acidic residues. Helical transmembrane passes span Met-42 to Phe-62 and Gly-73 to Glu-93.

The protein localises to the cell inner membrane. The sequence is that of Putative protein YmfH (ymfH) from Escherichia coli (strain K12).